Here is a 98-residue protein sequence, read N- to C-terminus: NADH-ubiquinone oxidoreductase chain 4L (98 aa).

3 consecutive transmembrane segments (helical) span residues 1-21 (MSLT…GLLM), 31-51 (LCLE…VLTI), and 61-81 (IILL…LVVV).

This sequence belongs to the complex I subunit 4L family. As to quaternary structure, core subunit of respiratory chain NADH dehydrogenase (Complex I) which is composed of 45 different subunits.

It localises to the mitochondrion inner membrane. It carries out the reaction a ubiquinone + NADH + 5 H(+)(in) = a ubiquinol + NAD(+) + 4 H(+)(out). In terms of biological role, core subunit of the mitochondrial membrane respiratory chain NADH dehydrogenase (Complex I) which catalyzes electron transfer from NADH through the respiratory chain, using ubiquinone as an electron acceptor. Part of the enzyme membrane arm which is embedded in the lipid bilayer and involved in proton translocation. This Chalinolobus tuberculatus (New Zealand long-tailed bat) protein is NADH-ubiquinone oxidoreductase chain 4L (MT-ND4L).